Here is a 487-residue protein sequence, read N- to C-terminus: Calcium-binding tyrosine phosphorylation-regulated protein (487 aa).

The 38-residue stretch at 12-49 folds into the RIIa domain; sequence YGLKTLLEGISRAVLKTNPSDINQFAAAYFQELTMYRG. 2 stretches are compositionally biased toward basic and acidic residues: residues 78–91 and 101–117; these read KKLE…KTSV and KSTD…EYSD. Disordered stretches follow at residues 78–163, 243–271, and 420–487; these read KKLE…AVSP, VDLG…QEPP, and IVSD…ATAE. Over residues 140–152 the composition is skewed to low complexity; the sequence is SSSKPATPKATTP. Polar residues-rich tracts occupy residues 420–436 and 455–464; these read IVSD…NSVP and SGTSVKSSSG. The span at 478–487 shows a compositional bias: acidic residues; sequence IEPEGEATAE.

As to quaternary structure, interacts with FSCB. Post-translationally, phosphorylated on tyrosine residues during in vitro capacitation. Dephosphorylation affects its ability to bind calcium.

It localises to the cytoplasm. The protein localises to the cytoskeleton. It is found in the cell projection. The protein resides in the cilium. Its subcellular location is the flagellum. In terms of biological role, may function as a regulator of both motility- and head-associated functions such as capacitation and the acrosome reaction. May bind calcium in vitro. The sequence is that of Calcium-binding tyrosine phosphorylation-regulated protein (CABYR) from Macaca fascicularis (Crab-eating macaque).